The sequence spans 163 residues: uncharacterized protein (163 aa).

4Fe-4S ferredoxin-type domains follow at residues 30–59 (REII…YSSD), 61–90 (LYIT…IIRL), 105–136 (KYEF…EYGS), and 136–163 (SKIR…IILR). Residues cysteine 39, cysteine 42, cysteine 45, cysteine 49, cysteine 70, cysteine 73, cysteine 76, cysteine 80, cysteine 116, cysteine 119, cysteine 122, cysteine 126, cysteine 145, cysteine 148, cysteine 151, and cysteine 155 each coordinate [4Fe-4S] cluster.

This is an uncharacterized protein from Methanocaldococcus jannaschii (strain ATCC 43067 / DSM 2661 / JAL-1 / JCM 10045 / NBRC 100440) (Methanococcus jannaschii).